The primary structure comprises 166 residues: Phospholipase A2 inhibitor clone 06/08 (166 aa).

A signal peptide spans Met-1–Gly-19. In terms of domain architecture, C-type lectin spans Leu-46–Glu-161. N-linked (GlcNAc...) asparagine glycosylation is found at Asn-61 and Asn-122. Cystine bridges form between Cys-83–Cys-160 and Cys-138–Cys-152.

It belongs to the alpha-type phospholipase A2 inhibitor family. Homotrimer; non-covalently linked. In terms of tissue distribution, expressed by the liver.

It is found in the secreted. This phospholipase A2 inhibitor binds directly phospholipase A2 in the presence or absence of calcium. This is Phospholipase A2 inhibitor clone 06/08 from Bothrops neuwiedi (Neuwied's lancehead).